The chain runs to 200 residues: NADH-quinone oxidoreductase subunit B 2 (200 aa).

[4Fe-4S] cluster is bound by residues Cys-79, Cys-80, Cys-144, and Cys-174.

This sequence belongs to the complex I 20 kDa subunit family. NDH-1 is composed of 14 different subunits. Subunits NuoB, C, D, E, F, and G constitute the peripheral sector of the complex. [4Fe-4S] cluster serves as cofactor.

It is found in the cell inner membrane. It carries out the reaction a quinone + NADH + 5 H(+)(in) = a quinol + NAD(+) + 4 H(+)(out). In terms of biological role, NDH-1 shuttles electrons from NADH, via FMN and iron-sulfur (Fe-S) centers, to quinones in the respiratory chain. The immediate electron acceptor for the enzyme in this species is believed to be ubiquinone. Couples the redox reaction to proton translocation (for every two electrons transferred, four hydrogen ions are translocated across the cytoplasmic membrane), and thus conserves the redox energy in a proton gradient. This chain is NADH-quinone oxidoreductase subunit B 2, found in Rhodopseudomonas palustris (strain BisA53).